Consider the following 474-residue polypeptide: Nitric oxide reductase subunit B (474 aa).

The chain crosses the membrane as a helical span at residues 19 to 39 (YFVFALILFVGQVLFGLIMGL). His60 serves as a coordination point for heme b. 8 consecutive transmembrane segments (helical) span residues 61–81 (TNLL…YLIP), 95–115 (IILF…YLFV), 145–165 (IGIV…MLKG), 169–189 (VVST…LFAF), 207–227 (HLWV…FVLI), 243–263 (VIIA…FFWI), 270–290 (LWVG…MVLF), and 308–328 (SLWA…WGFM). His207, His258, and His259 together coordinate Fe cation. Heme b is bound by residues His347 and His349. Transmembrane regions (helical) follow at residues 348–368 (GHLA…SYAM), 390–410 (FWLM…AGVV), and 433–453 (LAIF…GLVC).

This sequence belongs to the heme-copper respiratory oxidase family. In terms of assembly, heterodimer of cytochromes b (large subunit) and c (small subunit).

The protein resides in the cell membrane. The enzyme catalyses nitrous oxide + 2 Fe(III)-[cytochrome c] + H2O = 2 nitric oxide + 2 Fe(II)-[cytochrome c] + 2 H(+). Its pathway is nitrogen metabolism; nitrate reduction (denitrification); dinitrogen from nitrate: step 3/4. Its function is as follows. Component of the anaerobic respiratory chain that transforms nitrate to dinitrogen (denitrification). NorB is the catalytic subunit of the enzyme complex. Shows proton pump activity across the membrane in denitrifying bacterial cells. The mononitrogen reduction is probably coupled to electron transport phosphorylation. The protein is Nitric oxide reductase subunit B (norB) of Stutzerimonas stutzeri (Pseudomonas stutzeri).